The following is a 187-amino-acid chain: uncharacterized protein (187 aa).

Over residues Glu139 to Asp168 the composition is skewed to basic and acidic residues. Positions Glu139–Glu172 are disordered.

This is an uncharacterized protein from Caenorhabditis elegans.